Consider the following 149-residue polypeptide: Large ribosomal subunit protein bL9 (149 aa).

It belongs to the bacterial ribosomal protein bL9 family.

In terms of biological role, binds to the 23S rRNA. The chain is Large ribosomal subunit protein bL9 from Vibrio vulnificus (strain CMCP6).